A 714-amino-acid polypeptide reads, in one-letter code: Hormonally up-regulated neu tumor-associated kinase (714 aa).

Positions 1-16 (MPAAAGDGLLGEPAAP) are enriched in low complexity. The disordered stretch occupies residues 1–28 (MPAAAGDGLLGEPAAPGGDGGAEDTTRP). Residues 62 to 320 (LIGSRKLGEG…IQQALANRWL (259 aa)) form the Protein kinase domain. ATP contacts are provided by residues 68 to 76 (LGEGSFAKV) and Lys91. The active-site Proton acceptor is the Asp186. Over residues 624–635 (HEEKNSPPKEEG) the composition is skewed to basic and acidic residues. Disordered regions lie at residues 624 to 658 (HEEKNSPPKEEGVCSPPPVPSNGLLQPLGSPNCVK) and 674 to 714 (KRHQ…KGQC). The segment covering 692 to 703 (SPLQPTAPSSLS) has biased composition (polar residues).

This sequence belongs to the protein kinase superfamily. CAMK Ser/Thr protein kinase family. SNF1 subfamily.

The enzyme catalyses L-seryl-[protein] + ATP = O-phospho-L-seryl-[protein] + ADP + H(+). It catalyses the reaction L-threonyl-[protein] + ATP = O-phospho-L-threonyl-[protein] + ADP + H(+). This Mus musculus (Mouse) protein is Hormonally up-regulated neu tumor-associated kinase (Hunk).